Reading from the N-terminus, the 291-residue chain is Elongation factor Ts (291 aa).

Residues 79 to 82 are involved in Mg(2+) ion dislocation from EF-Tu; sequence TDFV.

This sequence belongs to the EF-Ts family.

Its subcellular location is the cytoplasm. Associates with the EF-Tu.GDP complex and induces the exchange of GDP to GTP. It remains bound to the aminoacyl-tRNA.EF-Tu.GTP complex up to the GTP hydrolysis stage on the ribosome. The sequence is that of Elongation factor Ts from Roseobacter denitrificans (strain ATCC 33942 / OCh 114) (Erythrobacter sp. (strain OCh 114)).